The following is a 287-amino-acid chain: Glutamate racemase (287 aa).

The span at 1-15 (MATKPQDANTTSREA) shows a compositional bias: polar residues. Residues 1 to 25 (MATKPQDANTTSREAITSKADSPPR) are disordered. Residues 32-33 (DS) and 64-65 (YG) each bind substrate. Cysteine 96 (proton donor/acceptor) is an active-site residue. 97–98 (NT) is a substrate binding site. Residue cysteine 208 is the Proton donor/acceptor of the active site. Residue 209 to 210 (TH) coordinates substrate.

Belongs to the aspartate/glutamate racemases family.

The enzyme catalyses L-glutamate = D-glutamate. The protein operates within cell wall biogenesis; peptidoglycan biosynthesis. Functionally, provides the (R)-glutamate required for cell wall biosynthesis. This chain is Glutamate racemase, found in Yersinia pseudotuberculosis serotype IB (strain PB1/+).